Here is a 209-residue protein sequence, read N- to C-terminus: MSTKSRTRSKTRLSRALGIPLTPKAAKYLEKRPYAPGEHGRSKRKQDSDYAVRLREKQRLRAQYGIREAQLKIAFQEARRTQGLTGENLVEILEQRLDALVVRSGLARTTAQARQLVVHRHIMVDGKIVDRPSFRVKAGQMIHVKPRSEGTEPFQVAAAGGHADVLPKLPPYLEVELDKLQARLVRLPKRAEVPVTCEVQLVVEYYAAR.

A compositionally biased stretch (basic residues) spans 1–13 (MSTKSRTRSKTRL). 2 disordered regions span residues 1–20 (MSTKSRTRSKTRLSRALGIP) and 28–49 (YLEKRPYAPGEHGRSKRKQDSD). Residues 95–160 (QRLDALVVRS…TEPFQVAAAG (66 aa)) form the S4 RNA-binding domain.

This sequence belongs to the universal ribosomal protein uS4 family. As to quaternary structure, part of the 30S ribosomal subunit. Contacts protein S5. The interaction surface between S4 and S5 is involved in control of translational fidelity.

One of the primary rRNA binding proteins, it binds directly to 16S rRNA where it nucleates assembly of the body of the 30S subunit. Its function is as follows. With S5 and S12 plays an important role in translational accuracy. This chain is Small ribosomal subunit protein uS4, found in Clavibacter sepedonicus (Clavibacter michiganensis subsp. sepedonicus).